Consider the following 242-residue polypeptide: Potassium/proton antiporter CemA (242 aa).

Helical transmembrane passes span 116 to 136 and 200 to 220; these read IIFC…YSIL and ISGF…YLIF.

Belongs to the CemA family.

It localises to the plastid. The protein localises to the chloroplast inner membrane. The enzyme catalyses K(+)(in) + H(+)(out) = K(+)(out) + H(+)(in). In terms of biological role, contributes to K(+)/H(+) antiport activity by supporting proton efflux to control proton extrusion and homeostasis in chloroplasts in a light-dependent manner to modulate photosynthesis. Prevents excessive induction of non-photochemical quenching (NPQ) under continuous-light conditions. Indirectly promotes efficient inorganic carbon uptake into chloroplasts. In Chloranthus spicatus (Chulantree), this protein is Potassium/proton antiporter CemA.